We begin with the raw amino-acid sequence, 91 residues long: Large ribosomal subunit protein uL22 (91 aa).

It belongs to the universal ribosomal protein uL22 family. Part of the 50S ribosomal subunit.

This protein binds specifically to 23S rRNA; its binding is stimulated by other ribosomal proteins, e.g. L4, L17, and L20. It is important during the early stages of 50S assembly. It makes multiple contacts with different domains of the 23S rRNA in the assembled 50S subunit and ribosome. Its function is as follows. The globular domain of the protein is located near the polypeptide exit tunnel on the outside of the subunit, while an extended beta-hairpin is found that lines the wall of the exit tunnel in the center of the 70S ribosome. The sequence is that of Large ribosomal subunit protein uL22 (rplV) from Loofah witches'-broom phytoplasma.